An 82-amino-acid polypeptide reads, in one-letter code: Putative Fe(2+) transport protein A (82 aa).

This sequence belongs to the FeoA family.

Functionally, might be involved in Fe(2+) ion uptake. The polypeptide is Putative Fe(2+) transport protein A (Leptolyngbya boryana (Plectonema boryanum)).